Consider the following 285-residue polypeptide: Eukaryotic translation initiation factor 3 subunit J (285 aa).

Disordered regions lie at residues 1-86 and 232-285; these read MSWD…QLDE and QARL…DDFM. Acidic residues predominate over residues 22-41; the sequence is WEDEEDDGPVLESWDVDPEE. The stretch at 36–81 forms a coiled coil; sequence DVDPEEEEKKKKEAKLQEAKRKAELKAKEDAEKAKKDAKRKELEQF. The segment covering 42 to 86 has biased composition (basic and acidic residues); it reads EEKKKKEAKLQEAKRKAELKAKEDAEKAKKDAKRKELEQFDQLDE. Acidic residues predominate over residues 269–285; the sequence is DDMDDGQFDDLDDDDFM.

It belongs to the eIF-3 subunit J family. As to quaternary structure, component of the eukaryotic translation initiation factor 3 (eIF-3) complex.

The protein localises to the cytoplasm. Functionally, component of the eukaryotic translation initiation factor 3 (eIF-3) complex, which is involved in protein synthesis of a specialized repertoire of mRNAs and, together with other initiation factors, stimulates binding of mRNA and methionyl-tRNAi to the 40S ribosome. The eIF-3 complex specifically targets and initiates translation of a subset of mRNAs involved in cell proliferation. This Candida albicans (strain SC5314 / ATCC MYA-2876) (Yeast) protein is Eukaryotic translation initiation factor 3 subunit J.